We begin with the raw amino-acid sequence, 338 residues long: Nicotinate-nucleotide--dimethylbenzimidazole phosphoribosyltransferase (338 aa).

Glu-305 serves as the catalytic Proton acceptor.

It belongs to the CobT family.

It carries out the reaction 5,6-dimethylbenzimidazole + nicotinate beta-D-ribonucleotide = alpha-ribazole 5'-phosphate + nicotinate + H(+). Its pathway is nucleoside biosynthesis; alpha-ribazole biosynthesis; alpha-ribazole from 5,6-dimethylbenzimidazole: step 1/2. In terms of biological role, catalyzes the synthesis of alpha-ribazole-5'-phosphate from nicotinate mononucleotide (NAMN) and 5,6-dimethylbenzimidazole (DMB). This is Nicotinate-nucleotide--dimethylbenzimidazole phosphoribosyltransferase from Rhizobium leguminosarum bv. trifolii (strain WSM2304).